The sequence spans 109 residues: Putative double-stranded DNA mimic protein YciU (109 aa).

The protein belongs to the putative dsDNA mimic protein family.

May act as a double-stranded DNA (dsDNA) mimic. Probably regulates the activity of a dsDNA-binding protein. The chain is Putative double-stranded DNA mimic protein YciU from Salmonella arizonae (strain ATCC BAA-731 / CDC346-86 / RSK2980).